The chain runs to 370 residues: Putative alanine racemase 2 (370 aa).

K38 acts as the Proton acceptor; specific for D-alanine in catalysis. K38 is subject to N6-(pyridoxal phosphate)lysine. The Proton acceptor; specific for L-alanine role is filled by Y266.

It belongs to the alanine racemase family. Pyridoxal 5'-phosphate serves as cofactor.

The catalysed reaction is L-alanine = D-alanine. The chain is Putative alanine racemase 2 (alr2) from Schizosaccharomyces pombe (strain 972 / ATCC 24843) (Fission yeast).